The primary structure comprises 304 residues: Thyroxine 5-deiodinase (304 aa).

The interval 1-23 (MPRQATSRLVVGEGEGSQGASGP) is disordered. Over 1–44 (MPRQATSRLVVGEGEGSQGASGPAATMLRSLLLHSLRLCAQTAS) the chain is Cytoplasmic. Residues 45 to 67 (CLVLFPRFLGTAFMLWLLDFLCI) traverse the membrane as a helical; Signal-anchor for type II membrane protein segment. The Extracellular segment spans residues 68 to 304 (RKHFLGRRRR…QLHGARPRRV (237 aa)). Positions 78 to 99 (GQPEPEVELNSEGEEVPPDDPP) are disordered. Residues 82–95 (PEVELNSEGEEVPP) are compositionally biased toward acidic residues. Selenocysteine 170 is a catalytic residue. Residue selenocysteine 170 is a non-standard amino acid, selenocysteine.

This sequence belongs to the iodothyronine deiodinase family. In terms of assembly, monomer. Homodimer. May undergo minor heretodimerization with DIO1 and DIO2. Expressed in placenta and several fetal tissues.

The protein resides in the cell membrane. Its subcellular location is the endosome membrane. It catalyses the reaction 3,3',5'-triiodo-L-thyronine + iodide + A + H(+) = L-thyroxine + AH2. It carries out the reaction 3,3'-diiodo-L-thyronine + iodide + A + H(+) = 3,3',5-triiodo-L-thyronine + AH2. The catalysed reaction is 3-iodo-L-thyronine + iodide + A + H(+) = 3,5-diiodo-L-thyronine + AH2. The enzyme catalyses L-thyronine + iodide + A + H(+) = 3-iodo-L-thyronine + AH2. It catalyses the reaction 3',5'-diiodo-L-thyronine + iodide + A + H(+) = 3,3',5'-triiodo-L-thyronine + AH2. It carries out the reaction 3'-iodo-L-thyronine + iodide + A + H(+) = 3,3'-diiodo-L-thyronine + AH2. The catalysed reaction is 3,3',5'-triiodothyronamine + iodide + A + H(+) = 3,3',5,5'-tetraiodothyronamine + AH2. The enzyme catalyses 3',5'-diiodothyronamine + iodide + A + H(+) = 3,3',5'-triiodothyronamine + AH2. It catalyses the reaction 3,3'-diiodothyronamine + iodide + A + H(+) = 3,3',5-triiodothyronamine + AH2. It carries out the reaction 3-iodothyronamine + iodide + A + H(+) = 3,5-diiodothyronamine + AH2. The catalysed reaction is 3'-iodothyronamine + iodide + A + H(+) = 3,3'-diiodothyronamine + AH2. The enzyme catalyses thyronamine + iodide + A + H(+) = 3-iodothyronamine + AH2. In terms of biological role, plays a crucial role in the metabolism of thyroid hormones (TH) and has specific roles in TH activation and inactivation by deiodination. Catalyzes the deiodination of L-thyroxine (T4) to 3,3',5'-triiodothyronine (rT3), 3,5,3'-triiodothyronine (T3) to 3,3'-diiodothyronine (3,3'-T2), 3,5-diiodothyronine (3,5-T2) to 3-monoiodothyronine (3-T1), rT3 to 3',5'-diiodothyronine (3',5'-T2) and 3,3'-T2 to 3'-monoiodothyronine (3'-T1) via inner-ring deiodination (IRD). Catalyzes the deiodination of 3-T1 to L-thyronine (T0) via outer-ring deiodination (ORD). Catalyzes the tyrosyl ring deiodinations of 3,3',5,5'-tetraiodothyronamine, 3,3',5'-triiodothyronamine, 3,5,3'-triiodothyronamine, 3,5-diiodothyronamine, 3,3'-diiodothyronamine and 3-iodothyronamine. In Homo sapiens (Human), this protein is Thyroxine 5-deiodinase (DIO3).